The chain runs to 238 residues: 1-(5-phosphoribosyl)-5-[(5-phosphoribosylamino)methylideneamino] imidazole-4-carboxamide isomerase (238 aa).

The Proton acceptor role is filled by D8. D130 acts as the Proton donor in catalysis.

It belongs to the HisA/HisF family.

The protein localises to the cytoplasm. It carries out the reaction 1-(5-phospho-beta-D-ribosyl)-5-[(5-phospho-beta-D-ribosylamino)methylideneamino]imidazole-4-carboxamide = 5-[(5-phospho-1-deoxy-D-ribulos-1-ylimino)methylamino]-1-(5-phospho-beta-D-ribosyl)imidazole-4-carboxamide. It functions in the pathway amino-acid biosynthesis; L-histidine biosynthesis; L-histidine from 5-phospho-alpha-D-ribose 1-diphosphate: step 4/9. The chain is 1-(5-phosphoribosyl)-5-[(5-phosphoribosylamino)methylideneamino] imidazole-4-carboxamide isomerase from Methanococcus maripaludis (strain C5 / ATCC BAA-1333).